Consider the following 216-residue polypeptide: MASKEELLQELSDAIVSCKKDRVIAAVEKAKEVMEPAEIIEKGLAAGMNQVGTLFERGKLFLPHVMMAADSMTAGVNILEAEMPAGTETKKLGVIVNGTVEGDVHDIGKSIVSTMLQSAGFEVHDIGRDVPIKNFVEKAKEVNADMIGLSALMTTTMQGQRDVIELLKEEGMRERVKVMVGGAPATQAWADKIGADCYAENASEAVAKAKELLLGK.

Residues 1–91 (MASKEELLQE…EMPAGTETKK (91 aa)) enclose the B12-binding N-terminal domain. Residues 92–216 (LGVIVNGTVE…AKAKELLLGK (125 aa)) form the B12-binding domain. Histidine 105 provides a ligand contact to methylcob(III)alamin.

Belongs to the methylamine corrinoid protein family.

The protein operates within one-carbon metabolism; methanogenesis from dimethylamine. In terms of biological role, acts as a methyl group carrier between MtbB and MtbA. The protein is Dimethylamine corrinoid protein 2 (mtbC2) of Methanosarcina acetivorans (strain ATCC 35395 / DSM 2834 / JCM 12185 / C2A).